Reading from the N-terminus, the 573-residue chain is Urease subunit alpha (573 aa).

In terms of domain architecture, Urease spans 136 to 573; the sequence is GAIDCHVHLI…LPMAQRYFLF (438 aa). Residues histidine 141, histidine 143, and lysine 224 each coordinate Ni(2+). Lysine 224 carries the N6-carboxylysine modification. Substrate is bound at residue histidine 226. Ni(2+) is bound by residues histidine 253 and histidine 279. The active-site Proton donor is histidine 327. Residue aspartate 367 coordinates Ni(2+).

The protein belongs to the metallo-dependent hydrolases superfamily. Urease alpha subunit family. As to quaternary structure, heterotrimer of UreA (gamma), UreB (beta) and UreC (alpha) subunits. Three heterotrimers associate to form the active enzyme. Requires Ni cation as cofactor. Post-translationally, carboxylation allows a single lysine to coordinate two nickel ions.

The protein localises to the cytoplasm. It carries out the reaction urea + 2 H2O + H(+) = hydrogencarbonate + 2 NH4(+). It functions in the pathway nitrogen metabolism; urea degradation; CO(2) and NH(3) from urea (urease route): step 1/1. The polypeptide is Urease subunit alpha (Mycolicibacterium vanbaalenii (strain DSM 7251 / JCM 13017 / BCRC 16820 / KCTC 9966 / NRRL B-24157 / PYR-1) (Mycobacterium vanbaalenii)).